The chain runs to 380 residues: Cytochrome b (380 aa).

Transmembrane regions (helical) follow at residues 34-54, 78-99, 114-134, and 179-199; these read FGSL…LLAM, WLIR…YLHI, WNTG…GYVL, and FFAL…IHLT. Residues H84 and H98 each coordinate heme b. 2 residues coordinate heme b: H183 and H197. H202 contributes to the a ubiquinone binding site. A run of 4 helical transmembrane segments spans residues 227-247, 289-309, 321-341, and 348-368; these read LKDI…ALFS, LGGV…PFLH, ISQL…WVGS, and FIII…ILFP.

The protein belongs to the cytochrome b family. In terms of assembly, the cytochrome bc1 complex contains 11 subunits: 3 respiratory subunits (MT-CYB, CYC1 and UQCRFS1), 2 core proteins (UQCRC1 and UQCRC2) and 6 low-molecular weight proteins (UQCRH/QCR6, UQCRB/QCR7, UQCRQ/QCR8, UQCR10/QCR9, UQCR11/QCR10 and a cleavage product of UQCRFS1). This cytochrome bc1 complex then forms a dimer. Requires heme b as cofactor.

The protein resides in the mitochondrion inner membrane. Functionally, component of the ubiquinol-cytochrome c reductase complex (complex III or cytochrome b-c1 complex) that is part of the mitochondrial respiratory chain. The b-c1 complex mediates electron transfer from ubiquinol to cytochrome c. Contributes to the generation of a proton gradient across the mitochondrial membrane that is then used for ATP synthesis. The sequence is that of Cytochrome b (MT-CYB) from Pelecanoides garnotii (Peruvian diving petrel).